A 189-amino-acid polypeptide reads, in one-letter code: Segregation and condensation protein B (189 aa).

Belongs to the ScpB family. Homodimer. Homodimerization may be required to stabilize the binding of ScpA to the Smc head domains. Component of a cohesin-like complex composed of ScpA, ScpB and the Smc homodimer, in which ScpA and ScpB bind to the head domain of Smc. The presence of the three proteins is required for the association of the complex with DNA.

It localises to the cytoplasm. Participates in chromosomal partition during cell division. May act via the formation of a condensin-like complex containing Smc and ScpA that pull DNA away from mid-cell into both cell halves. In Streptococcus sanguinis (strain SK36), this protein is Segregation and condensation protein B.